A 392-amino-acid polypeptide reads, in one-letter code: Formate-dependent phosphoribosylglycinamide formyltransferase (392 aa).

N(1)-(5-phospho-beta-D-ribosyl)glycinamide contacts are provided by residues 20–21 (EL) and E80. Residues R112, K153, 158-163 (SSGKGQ), 193-196 (EGFV), and E201 contribute to the ATP site. The ATP-grasp domain maps to 117-306 (RLAAEELGLP…EFALHVRAIL (190 aa)). Mg(2+) is bound by residues E265 and E277. N(1)-(5-phospho-beta-D-ribosyl)glycinamide-binding positions include D284, K355, and 362–363 (RR).

The protein belongs to the PurK/PurT family. As to quaternary structure, homodimer.

The catalysed reaction is N(1)-(5-phospho-beta-D-ribosyl)glycinamide + formate + ATP = N(2)-formyl-N(1)-(5-phospho-beta-D-ribosyl)glycinamide + ADP + phosphate + H(+). It participates in purine metabolism; IMP biosynthesis via de novo pathway; N(2)-formyl-N(1)-(5-phospho-D-ribosyl)glycinamide from N(1)-(5-phospho-D-ribosyl)glycinamide (formate route): step 1/1. Functionally, involved in the de novo purine biosynthesis. Catalyzes the transfer of formate to 5-phospho-ribosyl-glycinamide (GAR), producing 5-phospho-ribosyl-N-formylglycinamide (FGAR). Formate is provided by PurU via hydrolysis of 10-formyl-tetrahydrofolate. In Aeromonas salmonicida (strain A449), this protein is Formate-dependent phosphoribosylglycinamide formyltransferase.